The sequence spans 159 residues: NAD(P)H-quinone oxidoreductase subunit J, chloroplastic (159 aa).

It belongs to the complex I 30 kDa subunit family. In terms of assembly, NDH is composed of at least 16 different subunits, 5 of which are encoded in the nucleus.

It localises to the plastid. It is found in the chloroplast thylakoid membrane. It carries out the reaction a plastoquinone + NADH + (n+1) H(+)(in) = a plastoquinol + NAD(+) + n H(+)(out). The enzyme catalyses a plastoquinone + NADPH + (n+1) H(+)(in) = a plastoquinol + NADP(+) + n H(+)(out). Its function is as follows. NDH shuttles electrons from NAD(P)H:plastoquinone, via FMN and iron-sulfur (Fe-S) centers, to quinones in the photosynthetic chain and possibly in a chloroplast respiratory chain. The immediate electron acceptor for the enzyme in this species is believed to be plastoquinone. Couples the redox reaction to proton translocation, and thus conserves the redox energy in a proton gradient. In Triticum aestivum (Wheat), this protein is NAD(P)H-quinone oxidoreductase subunit J, chloroplastic.